The sequence spans 138 residues: Phospholipase A2 homolog crotoxin acid subunit CA (138 aa).

An N-terminal signal peptide occupies residues M1 to Y37. 8 cysteine pairs are disulfide-bonded: C42–C131, C44–C60, C59–C111, C65–C138, C66–C104, C73–C97, C91–C102, and C131–C138. A propeptide spanning residues V79–Y82 is cleaved from the precursor. Residue Q84 is modified to Pyrrolidone carboxylic acid. Positions Y119 to L124 are excised as a propeptide. Q125 is subject to Pyrrolidone carboxylic acid.

This sequence belongs to the phospholipase A2 family. Group II subfamily. D49 sub-subfamily. Heterodimer of one of the acidic (CA1, CA2, CA3 or CA4) and one of the basic (CBa1, CBa2, CBb, CBc or CBd) subunits; non-covalently linked. The acidic subunit is non-toxic, without enzymatic activity and comprises 3 peptides that are cross-linked by 5 disulfide bridges. The basic subunit is toxic, has phospholipase A2 activity and is composed of a single chain. Multiple variants of each subunit give different crotoxin complexes that can be subdivided into 2 classes: (1) those of high toxicity, low PLA2 activity (CBb, CBc and CBd linked with high affinity to any CA) and high stability (K(d)=4.5 nM) and (2) those of moderate toxicity, high PLA2 activity (CBa2 linked with low affinity to any CA) and low stability (K(d)=25 nM). Expressed by the venom gland.

The protein resides in the secreted. CAalpha-CAbeta-CAgamma: The acidic subunit of crotoxin (CA) is a heterotrimer of three disulfide-linked chains generated by post-translational maturation of a PLA2-like precursor. CA has no PLA2 activity and is not neurotoxic by itself, but plays several important functions in the crotoxin complex by increasing the lethal potency of the uncomplexed CB subunit. It acts by physically occluding the hydrophobic interfacial binding surface (IBS) of CB. This effect decreases the adsorption of CB to phospholipid membranes, targeting the crotoxin complex to reach the specific presynaptic receptor (R48) at the neuromuscular junction. It also prevents the formation of the reactive CB dimer. Moreover, the CA subunit inhibits the catalytic activity by partially masking the catalytic site of CB and inhibits its anticoagulant activity. In terms of biological role, heterodimer CA-CB: Crotoxin is a potent presynaptic neurotoxin that possesses phospholipase A2 (PLA2) activity and exerts a lethal action by blocking neuromuscular transmission. It consists of a non-covalent association of a basic and weakly toxic PLA2 subunit (CBa2, CBb, CBc, or CBd), with a small acidic, non-enzymatic and non-toxic subunit (CA1, CA2, CA3 or CA4). The complex acts by binding to a specific 48-kDa protein (R48/CAPT) receptor located on presynaptic membranes, forming a transient ternary complex CA-CB-R48, followed by dissociation of the CA-CB complex and release of the CA subunit. At equilibrium, only the CB subunits remain associated with the specific crotoxin receptor. In addition to neurotoxicity, crotoxin has been found to exert myotoxicity, nephrotoxicity, and cardiovascular toxicity. Moreover, anti-inflammatory, immunomodulatory, anti-tumor and analgesic effects of crotoxin have also been reported. Its function is as follows. Found in the venom as a monomer and stabilized by one disulfide bond (Cys-131 and Cys-138). This peptide induces potent antinociceptive effects in acute and chronic pain models. This effect is mediated by the release of peripheral dynorphin A, an endogenous agonist of kappa-opioid receptors, and this release is dependent on cannabinoid receptor CB2 activation. This is Phospholipase A2 homolog crotoxin acid subunit CA from Crotalus durissus terrificus (South American rattlesnake).